The chain runs to 273 residues: LOB domain-containing protein 20 (273 aa).

Basic and acidic residues predominate over residues 1–15 (MADQQRGHNTSDSRR). The disordered stretch occupies residues 1–39 (MADQQRGHNTSDSRRKSLAGKRTSQQTPTSSLSSGGVSM). Positions 23 to 39 (TSQQTPTSSLSSGGVSM) are enriched in low complexity. The LOB domain occupies 50–152 (SPCGACKFLR…AELSVVQSQL (103 aa)). The segment at 221 to 248 (LEHSLQPMPPHQQRRGDYQHEDEEESGA) is disordered.

It belongs to the LOB domain-containing protein family. In terms of tissue distribution, expressed in roots and flowers.

The sequence is that of LOB domain-containing protein 20 (LBD20) from Arabidopsis thaliana (Mouse-ear cress).